Reading from the N-terminus, the 217-residue chain is DNA repair protein homolog YobH (217 aa).

Residues 1 to 68 (MAKAIQSSMW…RPLSKMWGIG (68 aa)) enclose the UmuC domain.

The protein belongs to the DNA polymerase type-Y family.

This chain is DNA repair protein homolog YobH (yobH), found in Bacillus subtilis (strain 168).